Here is a 110-residue protein sequence, read N- to C-terminus: UPF0122 protein GK1195 (110 aa).

Belongs to the UPF0122 family.

Its function is as follows. Might take part in the signal recognition particle (SRP) pathway. This is inferred from the conservation of its genetic proximity to ftsY/ffh. May be a regulatory protein. In Geobacillus kaustophilus (strain HTA426), this protein is UPF0122 protein GK1195.